Here is a 301-residue protein sequence, read N- to C-terminus: Acetyl-coenzyme A carboxylase carboxyl transferase subunit beta (301 aa).

Positions 25–294 (LWIKDPSTGE…NSDAPEHEKT (270 aa)) constitute a CoA carboxyltransferase N-terminal domain. The disordered stretch occupies residues 282–301 (QPGNSDAPEHEKTEATDKAA). Over residues 288–301 (APEHEKTEATDKAA) the composition is skewed to basic and acidic residues.

Belongs to the AccD/PCCB family. In terms of assembly, acetyl-CoA carboxylase is a heterohexamer composed of biotin carboxyl carrier protein (AccB), biotin carboxylase (AccC) and two subunits each of ACCase subunit alpha (AccA) and ACCase subunit beta (AccD).

Its subcellular location is the cytoplasm. The catalysed reaction is N(6)-carboxybiotinyl-L-lysyl-[protein] + acetyl-CoA = N(6)-biotinyl-L-lysyl-[protein] + malonyl-CoA. Its pathway is lipid metabolism; malonyl-CoA biosynthesis; malonyl-CoA from acetyl-CoA: step 1/1. Its function is as follows. Component of the acetyl coenzyme A carboxylase (ACC) complex. Biotin carboxylase (BC) catalyzes the carboxylation of biotin on its carrier protein (BCCP) and then the CO(2) group is transferred by the transcarboxylase to acetyl-CoA to form malonyl-CoA. The protein is Acetyl-coenzyme A carboxylase carboxyl transferase subunit beta of Brucella anthropi (strain ATCC 49188 / DSM 6882 / CCUG 24695 / JCM 21032 / LMG 3331 / NBRC 15819 / NCTC 12168 / Alc 37) (Ochrobactrum anthropi).